We begin with the raw amino-acid sequence, 276 residues long: uncharacterized protein (276 aa).

The 118-residue stretch at 20–137 (PVLIFIPGAN…PPINTFLPDS (118 aa)) folds into the AB hydrolase-1 domain. Positions 57–76 (GESELTEPLPDSASNPDSDY) are disordered.

Belongs to the AB hydrolase superfamily.

This is an uncharacterized protein from Staphylococcus aureus (strain N315).